Consider the following 123-residue polypeptide: Small ribosomal subunit protein uS12cz/uS12cy (123 aa).

The protein belongs to the universal ribosomal protein uS12 family. Part of the 30S ribosomal subunit.

It is found in the plastid. Its subcellular location is the chloroplast. In terms of biological role, with S4 and S5 plays an important role in translational accuracy. Located at the interface of the 30S and 50S subunits. The chain is Small ribosomal subunit protein uS12cz/uS12cy (rps12-A) from Gossypium hirsutum (Upland cotton).